A 285-amino-acid chain; its full sequence is tRNA pseudouridine synthase A (285 aa).

Catalysis depends on D64, which acts as the Nucleophile. Y125 is a substrate binding site.

It belongs to the tRNA pseudouridine synthase TruA family. In terms of assembly, homodimer.

The enzyme catalyses uridine(38/39/40) in tRNA = pseudouridine(38/39/40) in tRNA. Formation of pseudouridine at positions 38, 39 and 40 in the anticodon stem and loop of transfer RNAs. This is tRNA pseudouridine synthase A from Streptomyces avermitilis (strain ATCC 31267 / DSM 46492 / JCM 5070 / NBRC 14893 / NCIMB 12804 / NRRL 8165 / MA-4680).